The sequence spans 179 residues: Acireductone dioxygenase (179 aa).

4 residues coordinate Fe(2+): histidine 99, histidine 101, glutamate 105, and histidine 143. Residues histidine 99, histidine 101, glutamate 105, and histidine 143 each coordinate Ni(2+).

The protein belongs to the acireductone dioxygenase (ARD) family. As to quaternary structure, monomer. Requires Fe(2+) as cofactor. Ni(2+) serves as cofactor.

It catalyses the reaction 1,2-dihydroxy-5-(methylsulfanyl)pent-1-en-3-one + O2 = 3-(methylsulfanyl)propanoate + CO + formate + 2 H(+). The catalysed reaction is 1,2-dihydroxy-5-(methylsulfanyl)pent-1-en-3-one + O2 = 4-methylsulfanyl-2-oxobutanoate + formate + 2 H(+). It functions in the pathway amino-acid biosynthesis; L-methionine biosynthesis via salvage pathway; L-methionine from S-methyl-5-thio-alpha-D-ribose 1-phosphate: step 5/6. Functionally, catalyzes 2 different reactions between oxygen and the acireductone 1,2-dihydroxy-3-keto-5-methylthiopentene (DHK-MTPene) depending upon the metal bound in the active site. Fe-containing acireductone dioxygenase (Fe-ARD) produces formate and 2-keto-4-methylthiobutyrate (KMTB), the alpha-ketoacid precursor of methionine in the methionine recycle pathway. Ni-containing acireductone dioxygenase (Ni-ARD) produces methylthiopropionate, carbon monoxide and formate, and does not lie on the methionine recycle pathway. The chain is Acireductone dioxygenase from Sulfurihydrogenibium sp. (strain YO3AOP1).